Consider the following 949-residue polypeptide: Bifunctional glutamine synthetase adenylyltransferase/adenylyl-removing enzyme (949 aa).

The tract at residues 1-450 (MQNQGNKVLS…HFNATVGGTD (450 aa)) is adenylyl removase. The tract at residues 455-949 (NDHWTALFWN…IEIYNEILAI (495 aa)) is adenylyl transferase.

It belongs to the GlnE family. It depends on Mg(2+) as a cofactor.

The catalysed reaction is [glutamine synthetase]-O(4)-(5'-adenylyl)-L-tyrosine + phosphate = [glutamine synthetase]-L-tyrosine + ADP. It carries out the reaction [glutamine synthetase]-L-tyrosine + ATP = [glutamine synthetase]-O(4)-(5'-adenylyl)-L-tyrosine + diphosphate. Involved in the regulation of glutamine synthetase GlnA, a key enzyme in the process to assimilate ammonia. When cellular nitrogen levels are high, the C-terminal adenylyl transferase (AT) inactivates GlnA by covalent transfer of an adenylyl group from ATP to specific tyrosine residue of GlnA, thus reducing its activity. Conversely, when nitrogen levels are low, the N-terminal adenylyl removase (AR) activates GlnA by removing the adenylyl group by phosphorolysis, increasing its activity. The regulatory region of GlnE binds the signal transduction protein PII (GlnB) which indicates the nitrogen status of the cell. In Shewanella frigidimarina (strain NCIMB 400), this protein is Bifunctional glutamine synthetase adenylyltransferase/adenylyl-removing enzyme.